The sequence spans 413 residues: Cardiolipin synthase B (413 aa).

2 PLD phosphodiesterase domains span residues 108–135 (VFRRMHRKIVVIDARIAFIGGLNYSAEH) and 285–312 (RRRPLHGKVALMDDHWATVGSSNLDPLS). Catalysis depends on residues His-113, Lys-115, Asp-120, His-290, Lys-292, and Asp-297. The interval 390 to 413 (VGPPAQPTMETQDRVETENTGVKP) is disordered.

This sequence belongs to the phospholipase D family. Cardiolipin synthase subfamily. ClsB sub-subfamily.

The protein localises to the cell membrane. The catalysed reaction is 2 a 1,2-diacyl-sn-glycero-3-phospho-(1'-sn-glycerol) = a cardiolipin + glycerol. In terms of biological role, catalyzes the phosphatidyl group transfer from one phosphatidylglycerol molecule to another to form cardiolipin (CL) (diphosphatidylglycerol) and glycerol. The chain is Cardiolipin synthase B from Escherichia coli O6:H1 (strain CFT073 / ATCC 700928 / UPEC).